Consider the following 307-residue polypeptide: MTSKLEQLKQYTTVVADTGDFDAIARLKPVDATTNPSLLLKAAALPRYAEHLRQATAGSGGDAGLACDRFAVAVGKDILGVIPGRISTEVDARLSFDSEATLARAHRLIELYDEQGIDRERVLIKIASTWEGIRAAEILEREGIQTNLTLLFSFAQAVACADAGVFLISPFVGRIYDWYKKSENRDYAGAEDPGVQSVSRIYRYYKANGYKTVVMGASFRNLGQIEQLAGCDRLTISPDLLQQLADAQGELPRLLLPGEGEPRQVLDESAFRWQMNEDAMATEKLAEGIRLFARDQEKLEYQLATRH.

Lys-125 (schiff-base intermediate with substrate) is an active-site residue.

The protein belongs to the transaldolase family. Type 1 subfamily.

The protein resides in the cytoplasm. It catalyses the reaction D-sedoheptulose 7-phosphate + D-glyceraldehyde 3-phosphate = D-erythrose 4-phosphate + beta-D-fructose 6-phosphate. It functions in the pathway carbohydrate degradation; pentose phosphate pathway; D-glyceraldehyde 3-phosphate and beta-D-fructose 6-phosphate from D-ribose 5-phosphate and D-xylulose 5-phosphate (non-oxidative stage): step 2/3. In terms of biological role, transaldolase is important for the balance of metabolites in the pentose-phosphate pathway. The polypeptide is Transaldolase (Pseudomonas aeruginosa (strain ATCC 15692 / DSM 22644 / CIP 104116 / JCM 14847 / LMG 12228 / 1C / PRS 101 / PAO1)).